A 66-amino-acid chain; its full sequence is MNILKFFFVFIVAMSLVSCSTAAPAKIPIKAIKTVGKAVGKGLRAINIASTANDVFNFLKPKKRKH.

A signal peptide spans 1 to 24 (MNILKFFFVFIVAMSLVSCSTAAP).

Expressed in fat body and to a lesser extent in hemocyte and Malpighian tubules.

It localises to the secreted. Functionally, has antibacterial activity against Gram-positive and Gram-negative bacteria. Probably acts by disturbing membrane functions with its amphipathic structure. This is Moricin-1 (MOR1) from Bombyx mori (Silk moth).